Reading from the N-terminus, the 280-residue chain is Transmembrane protein 45B (280 aa).

A run of 7 helical transmembrane segments spans residues 7–27 (HALP…KYPL), 49–69 (LIEG…EQFV), 96–116 (MYLF…PLNL), 120–140 (LDRL…YYHV), 150–170 (IHSL…IEVF), 184–204 (LTIL…PLGG), and 216–236 (VMFI…IMAI).

This sequence belongs to the TMEM45 family.

The protein localises to the membrane. This Xenopus tropicalis (Western clawed frog) protein is Transmembrane protein 45B (tmem45b).